A 302-amino-acid polypeptide reads, in one-letter code: Ribosomal RNA small subunit methyltransferase H (302 aa).

S-adenosyl-L-methionine-binding positions include 36–38 (GGH), Asp-56, Phe-84, Asp-99, and Gln-106.

This sequence belongs to the methyltransferase superfamily. RsmH family.

The protein resides in the cytoplasm. It catalyses the reaction cytidine(1402) in 16S rRNA + S-adenosyl-L-methionine = N(4)-methylcytidine(1402) in 16S rRNA + S-adenosyl-L-homocysteine + H(+). Its function is as follows. Specifically methylates the N4 position of cytidine in position 1402 (C1402) of 16S rRNA. This chain is Ribosomal RNA small subunit methyltransferase H, found in Christiangramia forsetii (strain DSM 17595 / CGMCC 1.15422 / KT0803) (Gramella forsetii).